We begin with the raw amino-acid sequence, 440 residues long: Chaperone SurA (440 aa).

Residues M1 to A25 form the signal peptide. 2 consecutive PpiC domains span residues S182–E283 and I294–E392.

The protein localises to the periplasm. The catalysed reaction is [protein]-peptidylproline (omega=180) = [protein]-peptidylproline (omega=0). Its function is as follows. Chaperone involved in the correct folding and assembly of outer membrane proteins. Recognizes specific patterns of aromatic residues and the orientation of their side chains, which are found more frequently in integral outer membrane proteins. May act in both early periplasmic and late outer membrane-associated steps of protein maturation. The sequence is that of Chaperone SurA from Nitrosospira multiformis (strain ATCC 25196 / NCIMB 11849 / C 71).